Consider the following 747-residue polypeptide: Polyribonucleotide nucleotidyltransferase (747 aa).

The Mg(2+) site is built by Asp-487 and Asp-493. Residues 554 to 613 (PSTTTIKIDKDKIRDIIGPGGKVIKEICETSGAKIDISDDGSVSVYASDRDKLKVALDKI) enclose the KH domain. Residues 623–691 (GEIFNGTVMK…NKGKAKLTIK (69 aa)) enclose the S1 motif domain. The tract at residues 691–747 (KNADKDKSSNNPKPKNNVNNAKENSEPERRDSSKKRAWNEDSNNDKEEAITERKYFN) is disordered. Residues 699–712 (SNNPKPKNNVNNAK) show a composition bias toward low complexity. The span at 727–747 (AWNEDSNNDKEEAITERKYFN) shows a compositional bias: basic and acidic residues.

This sequence belongs to the polyribonucleotide nucleotidyltransferase family. Mg(2+) is required as a cofactor.

The protein resides in the cytoplasm. It carries out the reaction RNA(n+1) + phosphate = RNA(n) + a ribonucleoside 5'-diphosphate. Involved in mRNA degradation. Catalyzes the phosphorolysis of single-stranded polyribonucleotides processively in the 3'- to 5'-direction. The sequence is that of Polyribonucleotide nucleotidyltransferase from Rickettsia felis (strain ATCC VR-1525 / URRWXCal2) (Rickettsia azadi).